Consider the following 340-residue polypeptide: Histidinol-phosphate aminotransferase (340 aa).

Lys-204 carries the post-translational modification N6-(pyridoxal phosphate)lysine.

The protein belongs to the class-II pyridoxal-phosphate-dependent aminotransferase family. Histidinol-phosphate aminotransferase subfamily. Pyridoxal 5'-phosphate is required as a cofactor.

It catalyses the reaction L-histidinol phosphate + 2-oxoglutarate = 3-(imidazol-4-yl)-2-oxopropyl phosphate + L-glutamate. Its pathway is amino-acid biosynthesis; L-histidine biosynthesis; L-histidine from 5-phospho-alpha-D-ribose 1-diphosphate: step 7/9. The polypeptide is Histidinol-phosphate aminotransferase (Thermococcus gammatolerans (strain DSM 15229 / JCM 11827 / EJ3)).